We begin with the raw amino-acid sequence, 302 residues long: Ventral anterior homeobox 2a (302 aa).

Disordered stretches follow at residues 1–35 (MFDQATSMGDGVSEERSPLCGKSATSCSERVRDKG), 50–73 (KDIPVTSTSSPGSSKEEVQDSQST), 156–175 (RRTKQKKDQSRDSEKRSSST), 199–223 (PPNLISSSQNNMGTSSGNGTNLGTS), and 282–302 (AFEPYTRLDRKDTASSKKSTS). The segment at residues 105 to 164 (PKRTRTSFTAEQLYRLELEFQRCQYVVGRERTELARQLNLSETQVKVWFQNRRTKQKKDQ) is a DNA-binding region (homeobox). Residues 161 to 172 (KKDQSRDSEKRS) show a composition bias toward basic and acidic residues. Residues 204 to 223 (SSSQNNMGTSSGNGTNLGTS) show a composition bias toward low complexity. Over residues 287-296 (TRLDRKDTAS) the composition is skewed to basic and acidic residues.

Belongs to the EMX homeobox family.

It localises to the nucleus. Its function is as follows. Transcription factor that may function in dorsoventral specification of the forebrain. Regulates the expression of Wnt signaling antagonists including the expression of a truncated tcf7l2 isoform that cannot bind ctnnb1 and acts therefore as a potent dominant-negative Wnt antagonist. Plays a crucial role in eye development and, in particular, in the specification of the ventral optic vesicle. May be a regulator of axial polarization in the retina. The sequence is that of Ventral anterior homeobox 2a (vax2-a) from Xenopus laevis (African clawed frog).